The primary structure comprises 430 residues: MATLSFKPSERYRLSDWRTNSYLLSTNAERQRDASHQIRQEARILRNETNNQIVWDEHDNRTRLAERIDTVNRWKETLDKCLTDLDAEIDSLAQAKESAEQNLQAKNLPLDVAIECLTLRESRRDIDVVRDPVEEELLKEVEVIEATKKVLQEKISQAFQHLCLLQEIRQQLNSDHRDKMETLEIDRGCLSLNLTSPNISLKVNPTRIPKDSTTLQQWDEFTRFNKNRAEAEMKASIELREAIALAIAQTNNELDAQRVATEFTFRKRLREMESFYSELKWQEKNTLEEIAELQGDIRRLEEDLRRKMMNLKLAHTRLESRTYRSNVELCRDQTQYGLIDEVHQLEATINTMKQKLAQTQNALDALFKHLARIQADIACKTNTLLLDTKCMDTRRKLTVPAEKFVPQVDTFTRTTNRTLSPLKICQLELT.

Coiled coils occupy residues 75–162 (KETL…FQHL) and 226–380 (KNRA…IACK).

The protein belongs to the tektin family. In terms of assembly, microtubule inner protein component of sperm flagellar doublet microtubules. May interact with CCDC172. In terms of processing, ubiquitinated, leading to its degradation. Deubiquitinated by USP16, promoting its stability. Tyrosine phosphorylated. In terms of tissue distribution, expressed in the testes (at protein level).

Its subcellular location is the cytoplasm. It localises to the cytoskeleton. The protein localises to the cilium axoneme. The protein resides in the flagellum axoneme. It is found in the microtubule organizing center. Microtubule inner protein (MIP) part of the dynein-decorated doublet microtubules (DMTs) in cilia and flagellar axoneme. Plays a key role in the assembly or attachment of the inner dynein arm to microtubules in sperm flagella and tracheal cilia. Forms filamentous polymers in the walls of ciliary and flagellar microtubules. This is Tektin-2 (Tekt2) from Mus musculus (Mouse).